Consider the following 291-residue polypeptide: Elongation factor Ts (291 aa).

An involved in Mg(2+) ion dislocation from EF-Tu region spans residues 80-83; that stretch reads TDFV.

Belongs to the EF-Ts family.

It is found in the cytoplasm. Functionally, associates with the EF-Tu.GDP complex and induces the exchange of GDP to GTP. It remains bound to the aminoacyl-tRNA.EF-Tu.GTP complex up to the GTP hydrolysis stage on the ribosome. This chain is Elongation factor Ts, found in Acinetobacter baumannii (strain AB307-0294).